We begin with the raw amino-acid sequence, 357 residues long: Heat-inducible transcription repressor HrcA (357 aa).

This sequence belongs to the HrcA family.

Functionally, negative regulator of class I heat shock genes (grpE-dnaK-dnaJ and groELS operons). Prevents heat-shock induction of these operons. The polypeptide is Heat-inducible transcription repressor HrcA (Chlorobium phaeovibrioides (strain DSM 265 / 1930) (Prosthecochloris vibrioformis (strain DSM 265))).